Here is a 460-residue protein sequence, read N- to C-terminus: MSEEEGRERAVTVEGDAESMNDGRALVQPPARSGDVITPTRAVLTLSKSMFNAGCFSLPYAWKLGGLWVSFVMSFVIAGLNWYGNHILVRASQHLAKKSDRSALDYGHFAKKVCDYSDIRFLRNNSKAVMYFVNVTILFYQLGMCSVAILFISDNLVNLVGDHLGGTRHQQMILMATVSLFFILLTNMFTEMRIVSFFALVSSVFFVIGAAVIMQYTVQQPNQWDKLPAATNFTGTITMIGMSMYAFEGQTMILPIENKLDNPAAFLAPFGVLSTTMIICTAFMTALGFFGYTGFGDSIAPTITTNVPKEGLYSTVNVFLMLQSLLGNSIAMYVVYDMFFNGFRRKFGARFPNVPKWLSDKGFRVFWVLVTYLMAVLIPKLEIMIPLVGVTSGALCALIFPPFFEMITFWTDWKGLLTYRQRMTKIFINLVVMAIGVFAIIAGVYTNIHAIIQSFSQPDP.

10 helical membrane-spanning segments follow: residues 64–84 (LGGL…NWYG), 132–152 (FVNV…ILFI), 172–192 (MILM…FTEM), 194–214 (IVSF…AVIM), 236–256 (TITM…ILPI), 270–290 (FGVL…LGFF), 316–336 (VNVF…YVVY), 362–382 (GFRV…PKLE), 383–403 (IMIP…FPPF), and 426–446 (IFIN…GVYT).

Belongs to the amino acid/polyamine transporter 2 family. In terms of tissue distribution, expressed in the head, tail, body and ventral nerve cord neurons, muscles of the vulva, and intestine.

It is found in the membrane. The protein localises to the cytoplasmic granule. In terms of biological role, plays a role in the accumulation of vital dyes and endogenous fluorescent compounds in lysosome related organelles. Has an effect on lysosome related organelle (LRO) function, in a pathway with serotonin. The sequence is that of Probable amino acid transporter skat-1 from Caenorhabditis elegans.